Consider the following 144-residue polypeptide: Large ribosomal subunit protein uL13 (144 aa).

Belongs to the universal ribosomal protein uL13 family. Part of the 50S ribosomal subunit.

In terms of biological role, this protein is one of the early assembly proteins of the 50S ribosomal subunit, although it is not seen to bind rRNA by itself. It is important during the early stages of 50S assembly. The sequence is that of Large ribosomal subunit protein uL13 from Clostridium botulinum (strain ATCC 19397 / Type A).